The primary structure comprises 31 residues: M-poneritoxin-Nc3b (31 aa).

The protein belongs to the ponericin-G family. In terms of tissue distribution, expressed by the venom gland.

The protein localises to the secreted. Its subcellular location is the target cell membrane. Its function is as follows. Membrane-perturbating peptide with a few moderate activities. It is insecticidal, since it induces reversible paralysis in insects (L.cuprina) after 1 hour, but fails to kill them. It is also antiparasitic, since it moderately inhibits the larval development of the major pathogenic nematode of ruminants (H.contortus, IC(50)=23.2 uM) and reduces the motility of adult males of the other nematode B.malayi. It does not show antibacterial activity (MIC&gt;40 uM). It is not cytotoxic to HEK293 cells and does not induce hemolysis in human erythrocytes. It does not cause an increase in intracellular calcium concentration on neuronal and epithelial cell lines. The protein is M-poneritoxin-Nc3b of Neoponera commutata (Large hunting ant).